Here is a 474-residue protein sequence, read N- to C-terminus: ERO1-like protein alpha (474 aa).

A signal peptide spans Met1–Ser29. 8 disulfide bridges follow: Cys40–Cys53, Cys42–Cys51, Cys90–Cys398, Cys99–Cys104, Cys99–Cys138, Cys104–Cys109, Cys215–Cys248, and Cys401–Cys404. Arg194, Thr196, and Trp207 together coordinate FAD. The FAD site is built by Ser259, His262, Arg294, and Arg307. N-linked (GlcNAc...) asparagine glycosylation is found at Asn340 and Asn391. Asn430 carries an N-linked (GlcNAc...) asparagine glycan.

Belongs to the EROs family. In terms of assembly, predominantly monomer. May function both as a monomer and a homodimer. FAD is required as a cofactor. The Cys-99/Cys-104 and Cys-401/Cys-404 disulfide bonds constitute the redox-active center. The Cys-99/Cys-104 disulfide bond may accept electron from protein disulfide isomerase (PDI) and funnel them to the active site disulfide Cys-401/Cys-404.

Its subcellular location is the endoplasmic reticulum membrane. With respect to regulation, enzyme activity is tightly regulated to prevent the accumulation of reactive oxygen species in the endoplasmic reticulum. Reversibly down-regulated by the formation of disulfide bonds between the active site Cys-99 and Cys-138, and between Cys-104 and Cys-109. Glutathione may be required to regulate its activity in the endoplasmic reticulum. In terms of biological role, oxidoreductase involved in disulfide bond formation in the endoplasmic reticulum. Efficiently reoxidizes P4HB/PDI, the enzyme catalyzing protein disulfide formation, in order to allow P4HB to sustain additional rounds of disulfide formation. Following P4HB reoxidation, passes its electrons to molecular oxygen via FAD, leading to the production of reactive oxygen species (ROS) in the cell. Required for the folding of immunoglobulins. The chain is ERO1-like protein alpha from Xenopus tropicalis (Western clawed frog).